Consider the following 399-residue polypeptide: Probable peptidoglycan glycosyltransferase FtsW (399 aa).

At M1 to P25 the chain is on the cytoplasmic side. The chain crosses the membrane as a helical span at residues L26–M46. The Periplasmic segment spans residues S47 to A64. A helical transmembrane segment spans residues I65–W85. Over E86–H88 the chain is Cytoplasmic. The helical transmembrane segment at G89–G109 threads the bilayer. Over R110–R117 the chain is Periplasmic. Residues W118–L138 traverse the membrane as a helical segment. The Cytoplasmic segment spans residues Y139 to N153. A helical transmembrane segment spans residues Q154–M174. The Periplasmic segment spans residues Q175 to D177. Helical transmembrane passes span F178–S198 and L199–F219. Topologically, residues S220–S281 are periplasmic. The helical transmembrane segment at V282–L302 threads the bilayer. The Cytoplasmic portion of the chain corresponds to S303–Q326. Residues G327–L347 form a helical membrane-spanning segment. The Periplasmic segment spans residues P348–T353. Residues L354–L374 traverse the membrane as a helical segment. Topologically, residues L375–A399 are cytoplasmic.

Belongs to the SEDS family. FtsW subfamily.

It localises to the cell inner membrane. The enzyme catalyses [GlcNAc-(1-&gt;4)-Mur2Ac(oyl-L-Ala-gamma-D-Glu-L-Lys-D-Ala-D-Ala)](n)-di-trans,octa-cis-undecaprenyl diphosphate + beta-D-GlcNAc-(1-&gt;4)-Mur2Ac(oyl-L-Ala-gamma-D-Glu-L-Lys-D-Ala-D-Ala)-di-trans,octa-cis-undecaprenyl diphosphate = [GlcNAc-(1-&gt;4)-Mur2Ac(oyl-L-Ala-gamma-D-Glu-L-Lys-D-Ala-D-Ala)](n+1)-di-trans,octa-cis-undecaprenyl diphosphate + di-trans,octa-cis-undecaprenyl diphosphate + H(+). It participates in cell wall biogenesis; peptidoglycan biosynthesis. Functionally, peptidoglycan polymerase that is essential for cell division. This Allochromatium vinosum (strain ATCC 17899 / DSM 180 / NBRC 103801 / NCIMB 10441 / D) (Chromatium vinosum) protein is Probable peptidoglycan glycosyltransferase FtsW.